The following is a 149-amino-acid chain: Transcriptional repressor NrdR (149 aa).

A zinc finger lies at 3 to 34 (CPFCSHQETQVVETRVSEDGDFIRRRRQCGAC). The region spanning 49–139 (PTVVKKDGRR…VYRSFEDIDE (91 aa)) is the ATP-cone domain.

Belongs to the NrdR family. Zn(2+) serves as cofactor.

In terms of biological role, negatively regulates transcription of bacterial ribonucleotide reductase nrd genes and operons by binding to NrdR-boxes. The chain is Transcriptional repressor NrdR from Acidovorax sp. (strain JS42).